Here is a 367-residue protein sequence, read N- to C-terminus: Phosphoribosylformylglycinamidine cyclo-ligase (367 aa).

It belongs to the AIR synthase family.

It localises to the cytoplasm. It carries out the reaction 2-formamido-N(1)-(5-O-phospho-beta-D-ribosyl)acetamidine + ATP = 5-amino-1-(5-phospho-beta-D-ribosyl)imidazole + ADP + phosphate + H(+). It participates in purine metabolism; IMP biosynthesis via de novo pathway; 5-amino-1-(5-phospho-D-ribosyl)imidazole from N(2)-formyl-N(1)-(5-phospho-D-ribosyl)glycinamide: step 2/2. The sequence is that of Phosphoribosylformylglycinamidine cyclo-ligase from Cyanothece sp. (strain PCC 7425 / ATCC 29141).